The chain runs to 623 residues: UvrABC system protein C (623 aa).

Residues 13–92 (DKPGVYIMKN…IKKYKPRYNI (80 aa)) form the GIY-YIG domain. Residues 204 to 239 (NDIIRELKEEMEKASMNLDFEKAADLRDKMLAAQKV) enclose the UVR domain.

This sequence belongs to the UvrC family. Interacts with UvrB in an incision complex.

Its subcellular location is the cytoplasm. Functionally, the UvrABC repair system catalyzes the recognition and processing of DNA lesions. UvrC both incises the 5' and 3' sides of the lesion. The N-terminal half is responsible for the 3' incision and the C-terminal half is responsible for the 5' incision. This is UvrABC system protein C from Clostridium acetobutylicum (strain ATCC 824 / DSM 792 / JCM 1419 / IAM 19013 / LMG 5710 / NBRC 13948 / NRRL B-527 / VKM B-1787 / 2291 / W).